The primary structure comprises 1025 residues: Multidrug resistance protein MdtC (1025 aa).

Helical transmembrane passes span 3-23 (FFAL…AITL), 333-353 (EVEQ…FLFL), 360-380 (IIPA…MYLC), 387-407 (LSLM…IVVL), 431-451 (VGFT…PLLL), 463-483 (FAVT…TLTP), 528-548 (LVGV…ISIP), 853-873 (VILI…LYES), 875-895 (VHPL…LLAL), 897-917 (LFNA…IGIV), 953-973 (PIMM…LSGG), and 984-1004 (ITIV…TPVV).

The protein belongs to the resistance-nodulation-cell division (RND) (TC 2.A.6) family. MdtC subfamily. As to quaternary structure, part of a tripartite efflux system composed of MdtA, MdtB and MdtC. MdtC forms a heteromultimer with MdtB.

The protein localises to the cell inner membrane. The sequence is that of Multidrug resistance protein MdtC from Shigella boydii serotype 4 (strain Sb227).